A 112-amino-acid polypeptide reads, in one-letter code: Protein lin-52 homolog (112 aa).

This sequence belongs to the lin-52 family. In terms of assembly, component of the DREAM complex. Expressed in the brain, liver and retina. Highly expressed in the retinal ganglion cell and inner nuclear layers at the parr stage. Expressed at a lower level in inner segments of some retinal photoreceptors.

Functionally, may be involved in retinal development. This Oncorhynchus mykiss (Rainbow trout) protein is Protein lin-52 homolog (lin52).